A 157-amino-acid polypeptide reads, in one-letter code: MPSVESFELDHTIVKAPYVRHCGVHNVGSDGIVNKFDIRFCQPNKQAMKPDVIHTLEHLLAFNLRKYIDRYPHFDIIDISPMGCQTGYYLVVSGTPTVREIIDLLELTLKDAVQITEIPAANETQCGQAKLHDLEGAQRLMNFWLSQDKDELEKVFG.

Fe cation contacts are provided by His-54, His-58, and Cys-126.

Belongs to the LuxS family. As to quaternary structure, homodimer. The cofactor is Fe cation.

It catalyses the reaction S-(5-deoxy-D-ribos-5-yl)-L-homocysteine = (S)-4,5-dihydroxypentane-2,3-dione + L-homocysteine. Involved in the synthesis of autoinducer 2 (AI-2) which is secreted by bacteria and is used to communicate both the cell density and the metabolic potential of the environment. The regulation of gene expression in response to changes in cell density is called quorum sensing. Catalyzes the transformation of S-ribosylhomocysteine (RHC) to homocysteine (HC) and 4,5-dihydroxy-2,3-pentadione (DPD). The sequence is that of S-ribosylhomocysteine lyase from Bacillus cereus (strain G9842).